Consider the following 356-residue polypeptide: D-alanine--D-alanine ligase (356 aa).

Positions 134–339 constitute an ATP-grasp domain; the sequence is KQLFAHRGLP…YADLITKLIE (206 aa). 167–222 contributes to the ATP binding site; the sequence is KDKLEFPVFVKPANLGSSVGISKCNNEEELKSGIEEAFQFDRKLVIEQGIEAREIE. Mg(2+) is bound by residues aspartate 293, glutamate 306, and asparagine 308.

Belongs to the D-alanine--D-alanine ligase family. It depends on Mg(2+) as a cofactor. Mn(2+) is required as a cofactor.

The protein localises to the cytoplasm. The catalysed reaction is 2 D-alanine + ATP = D-alanyl-D-alanine + ADP + phosphate + H(+). Its pathway is cell wall biogenesis; peptidoglycan biosynthesis. Its function is as follows. Cell wall formation. The chain is D-alanine--D-alanine ligase from Staphylococcus carnosus (strain TM300).